Here is a 201-residue protein sequence, read N- to C-terminus: MALPWALAVLSLLPLLHAQDPACANFSTSPITNATLDQLSHKWFFTASAFRNPKYKQLVQHTQAAFFYFTAIKEEDTLLLREYITTNNTCFYNSSIVRVQRENGTLSKHDGIRNSVADLLLLRDPGSFLLVFFAGKEQDKGMSFYTDKPKASPEQLEEFYEALTCLGMNKTEVVYTDWTKDLCEPLEKQHEEERKKEKAES.

An N-terminal signal peptide occupies residues 1–18 (MALPWALAVLSLLPLLHA). Residues Asn25, Asn33, Asn87, Asn93, Asn103, and Asn169 are each glycosylated (N-linked (GlcNAc...) asparagine). Cysteines 90 and 183 form a disulfide.

The protein belongs to the calycin superfamily. Lipocalin family.

It is found in the secreted. Functionally, functions as a transport protein in the blood stream. Binds various ligands in the interior of its beta-barrel domain. Appears to function in modulating the activity of the immune system during the acute-phase reaction. The polypeptide is Alpha-1-acid glycoprotein (ORM1) (Oryctolagus cuniculus (Rabbit)).